Consider the following 427-residue polypeptide: Actin-related protein 3 (427 aa).

It belongs to the actin family. ARP3 subfamily. Component of the Arp2/3 complex composed of arp2, act2, arc1/p41-ARC, arc2/p34-ARC, arc3/p21-ARC, arc4/p20-ARC and arc5/p16-ARC.

Its subcellular location is the cytoplasm. It localises to the cytoskeleton. It is found in the actin patch. Functions as ATP-binding component of the Arp2/3 complex which is involved in regulation of actin polymerization and together with an activating nucleation-promoting factor (NPF) mediates the formation of branched actin networks. Seems to contact the pointed end of the daughter actin filament. May be involved in cytokinesis. The polypeptide is Actin-related protein 3 (act2) (Schizosaccharomyces pombe (strain 972 / ATCC 24843) (Fission yeast)).